Consider the following 388-residue polypeptide: Succinate--CoA ligase [ADP-forming] subunit beta (388 aa).

In terms of domain architecture, ATP-grasp spans 9-244; it reads KEILRKYGVT…LDEEDPAEIE (236 aa). Residues Lys46, 53–55, Glu99, Ala102, and Glu107 contribute to the ATP site; that span reads GRG. Positions 199 and 213 each coordinate Mg(2+). Substrate contacts are provided by residues Asn264 and 321-323; that span reads GIM.

It belongs to the succinate/malate CoA ligase beta subunit family. In terms of assembly, heterotetramer of two alpha and two beta subunits. Requires Mg(2+) as cofactor.

The catalysed reaction is succinate + ATP + CoA = succinyl-CoA + ADP + phosphate. The enzyme catalyses GTP + succinate + CoA = succinyl-CoA + GDP + phosphate. It participates in carbohydrate metabolism; tricarboxylic acid cycle; succinate from succinyl-CoA (ligase route): step 1/1. Functionally, succinyl-CoA synthetase functions in the citric acid cycle (TCA), coupling the hydrolysis of succinyl-CoA to the synthesis of either ATP or GTP and thus represents the only step of substrate-level phosphorylation in the TCA. The beta subunit provides nucleotide specificity of the enzyme and binds the substrate succinate, while the binding sites for coenzyme A and phosphate are found in the alpha subunit. This is Succinate--CoA ligase [ADP-forming] subunit beta from Janthinobacterium sp. (strain Marseille) (Minibacterium massiliensis).